We begin with the raw amino-acid sequence, 214 residues long: uncharacterized protein (214 aa).

Residues 10–30 (LLLAGIGGFMVGGLASWVVSS) traverse the membrane as a helical segment. Positions 147–157 (SSQANSQSTQP) are enriched in polar residues. Positions 147–166 (SSQANSQSTQPRDPIPTENF) are disordered.

The protein localises to the membrane. This is an uncharacterized protein from Schizosaccharomyces pombe (strain 972 / ATCC 24843) (Fission yeast).